The primary structure comprises 222 residues: 7-cyano-7-deazaguanine synthase (222 aa).

11-21 (LSGGMDSAVLL) serves as a coordination point for ATP. Zn(2+)-binding residues include Cys192, Cys200, Cys203, and Cys206.

Belongs to the QueC family. Zn(2+) is required as a cofactor.

It catalyses the reaction 7-carboxy-7-deazaguanine + NH4(+) + ATP = 7-cyano-7-deazaguanine + ADP + phosphate + H2O + H(+). It functions in the pathway purine metabolism; 7-cyano-7-deazaguanine biosynthesis. Its function is as follows. Catalyzes the ATP-dependent conversion of 7-carboxy-7-deazaguanine (CDG) to 7-cyano-7-deazaguanine (preQ(0)). This is 7-cyano-7-deazaguanine synthase from Sulfurihydrogenibium sp. (strain YO3AOP1).